The sequence spans 191 residues: NF-kappa-B inhibitor-interacting Ras-like protein 2 (191 aa).

The segment at 1–191 is small GTPase-like; sequence MGKSCKVVVC…KNKGSGSLDG (191 aa). 11 to 18 lines the GTP pocket; it reads GQASVGKT. An Effector region motif is present at residues 35-43; the sequence is MIETQEDIY. GTP contacts are provided by residues 61–65 and 120–123; these read DTRGL and NKCD. A disordered region spans residues 169-191; that stretch reads TQPQSKSAFPLSRKNKGSGSLDG.

Belongs to the small GTPase superfamily. Ras family. KappaB-Ras subfamily. Interacts with both NF-kappa-B inhibitor alpha (NFKBIA) and beta (NFKBIB) in vitro. However, it probably only interacts with NFKBIB in vivo. Interacts with GFOD1. As to expression, widely expressed.

It is found in the cytoplasm. Atypical Ras-like protein that acts as a potent regulator of NF-kappa-B activity by preventing the degradation of NF-kappa-B inhibitor beta (NFKBIB) by most signals, explaining why NFKBIB is more resistant to degradation. May act by blocking phosphorylation of NFKBIB and nuclear localization of p65/RELA NF-kappa-B subunit. It is unclear whether it acts as a GTPase. Both GTP- and GDP-bound forms block phosphorylation of NFKBIB. This Homo sapiens (Human) protein is NF-kappa-B inhibitor-interacting Ras-like protein 2 (NKIRAS2).